Reading from the N-terminus, the 294-residue chain is Homeobox-leucine zipper protein ATHB-16 (294 aa).

Over residues 1-20 (MKRLSSSDSMCGLISTSTDE) the composition is skewed to polar residues. Positions 1-31 (MKRLSSSDSMCGLISTSTDEQSPRGYGSNYQ) are disordered. The homeobox DNA-binding region spans 56–115 (LSEKKRRLKVDQVKALEKNFELENKLEPERKTKLAQELGLQPRQVAVWFQNRRARWKTKQ). Residues 116–151 (LEKDYGVLKGQYDSLRHNFDSLRRDNDSLLQEISKI) form a leucine-zipper region. Polar residues predominate over residues 219 to 238 (SSDSCDSSAVLNDETSSDNG). The tract at residues 219–241 (SSDSCDSSAVLNDETSSDNGRLT) is disordered.

The protein belongs to the HD-ZIP homeobox family. Class I subfamily. As to expression, widely expressed with a lower level in siliques.

It is found in the nucleus. Its function is as follows. Probable transcription factor that may function as a negative regulator of the flowering time response to photoperiod. May act to repress cell expansion during plant development. This Arabidopsis thaliana (Mouse-ear cress) protein is Homeobox-leucine zipper protein ATHB-16 (ATHB-16).